A 255-amino-acid polypeptide reads, in one-letter code: MQQQQTLSNSFLSRTFVLLYGVFCYFTFLLTCVYAVGFIGNIFLPKSLDSKSQESLVTALLIDVGLLGIFALQHSVMARKQFKAWWTRLIPKPMERSTYVLFSSLALMLVFWQWHPIGITIWNFDNLVGQIIFYSLFALGWVIVLVSTFLINHFDLFGLRQVYLYFEEKEYTPLKFKTPAFYQYVRHPLYVGWFLVFWMTPIMTVAHLVFASVTTIYILVAIQLEEKDLVAIHGEKYENYRRQVPMLIPFIGKKS.

A run of 5 helical transmembrane segments spans residues 16–36, 56–76, 99–119, 131–151, and 191–211; these read FVLL…VYAV, LVTA…QHSV, YVLF…PIGI, IIFY…TFLI, and VGWF…LVFA.

It belongs to the nurim family.

It localises to the membrane. The enzyme catalyses methanethiol + S-adenosyl-L-methionine = dimethyl sulfide + S-adenosyl-L-homocysteine + H(+). In terms of biological role, catalyzes the methylation of methanethiol (MeSH) to yield dimethylsulphide (DMS). The polypeptide is Methanethiol S-methyltransferase (Crocosphaera subtropica (strain ATCC 51142 / BH68) (Cyanothece sp. (strain ATCC 51142))).